The primary structure comprises 356 residues: UDP-N-acetylglucosamine--N-acetylmuramyl-(pentapeptide) pyrophosphoryl-undecaprenol N-acetylglucosamine transferase (356 aa).

UDP-N-acetyl-alpha-D-glucosamine contacts are provided by residues 10–12 (TAG), asparagine 123, arginine 159, serine 193, isoleucine 240, and glutamine 284.

Belongs to the glycosyltransferase 28 family. MurG subfamily.

It localises to the cell membrane. The enzyme catalyses di-trans,octa-cis-undecaprenyl diphospho-N-acetyl-alpha-D-muramoyl-L-alanyl-D-glutamyl-meso-2,6-diaminopimeloyl-D-alanyl-D-alanine + UDP-N-acetyl-alpha-D-glucosamine = di-trans,octa-cis-undecaprenyl diphospho-[N-acetyl-alpha-D-glucosaminyl-(1-&gt;4)]-N-acetyl-alpha-D-muramoyl-L-alanyl-D-glutamyl-meso-2,6-diaminopimeloyl-D-alanyl-D-alanine + UDP + H(+). The protein operates within cell wall biogenesis; peptidoglycan biosynthesis. In terms of biological role, cell wall formation. Catalyzes the transfer of a GlcNAc subunit on undecaprenyl-pyrophosphoryl-MurNAc-pentapeptide (lipid intermediate I) to form undecaprenyl-pyrophosphoryl-MurNAc-(pentapeptide)GlcNAc (lipid intermediate II). The protein is UDP-N-acetylglucosamine--N-acetylmuramyl-(pentapeptide) pyrophosphoryl-undecaprenol N-acetylglucosamine transferase of Corynebacterium glutamicum (strain ATCC 13032 / DSM 20300 / JCM 1318 / BCRC 11384 / CCUG 27702 / LMG 3730 / NBRC 12168 / NCIMB 10025 / NRRL B-2784 / 534).